The primary structure comprises 143 residues: Putative pre-16S rRNA nuclease (143 aa).

It belongs to the YqgF nuclease family.

It localises to the cytoplasm. Functionally, could be a nuclease involved in processing of the 5'-end of pre-16S rRNA. The chain is Putative pre-16S rRNA nuclease from Lactobacillus gasseri (strain ATCC 33323 / DSM 20243 / BCRC 14619 / CIP 102991 / JCM 1131 / KCTC 3163 / NCIMB 11718 / NCTC 13722 / AM63).